The primary structure comprises 557 residues: Small ribosomal subunit protein bS1 (557 aa).

4 S1 motif domains span residues glycine 21 to glutamate 87, alanine 105 to arginine 171, glycine 192 to lysine 260, and glycine 277 to lysine 347. Residues lysine 229, lysine 279, and lysine 363 each carry the N6-acetyllysine modification. 2 consecutive S1 motif domains span residues glycine 364 to lysine 434 and glycine 451 to arginine 520.

The protein belongs to the bacterial ribosomal protein bS1 family. As to quaternary structure, part of the 30S ribosomal subunit. Some nascent polypeptide chains are able to cross-link to this protein in situ. Can be cross-linked to mRNA in the ribosome. In terms of processing, phosphorylated; probably on a serine.

In terms of biological role, required for translation of most natural mRNAs except for leaderless mRNA. Binds mRNA upstream of the Shine-Dalgarno (SD) sequence and helps it bind to the 30S ribosomal subunit; acts as an RNA chaperone to unfold structured mRNA on the ribosome but is not essential for mRNAs with strong SDs and little 5'-UTR structure, thus it may help fine-tune which mRNAs that are translated. Unwinds dsRNA by binding to transiently formed ssRNA regions; binds about 10 nucleotides. Has a preference for polypyrimidine tracts. Negatively autoregulates its own translation. This is Small ribosomal subunit protein bS1 (rpsA) from Escherichia coli O157:H7.